Consider the following 238-residue polypeptide: Chorionic somatomammotropin hormone 2 (238 aa).

An N-terminal signal peptide occupies residues 1 to 36; that stretch reads MAPAPSFRGHQWTYNPVRGSCLLLLLVVSNLLLCQG. Zn(2+) is bound at residue H66. 4 N-linked (GlcNAc...) asparagine glycosylation sites follow: N70, N92, N146, and N160. Residues C97 and C215 are joined by a disulfide bond. A Zn(2+)-binding site is contributed by D224. An intrachain disulfide couples C232 to C238.

The protein belongs to the somatotropin/prolactin family.

Its subcellular location is the secreted. This Bos taurus (Bovine) protein is Chorionic somatomammotropin hormone 2 (CSH2).